Here is a 333-residue protein sequence, read N- to C-terminus: Chlorophyllide reductase 35.5 kDa chain (333 aa).

The segment at 1–22 (MTDAPNLKGFDARLREEAAEEP) is disordered. Residues 45–50 (GSGKSF) and Lys-74 contribute to the ATP site. Ser-49 provides a ligand contact to Mg(2+). [4Fe-4S] cluster-binding residues include Cys-130 and Cys-165. 219 to 220 (NK) lines the ATP pocket.

Belongs to the NifH/BchL/ChlL family. In terms of assembly, homodimer. Chlorophyllide reductase is composed of three subunits; BchX, BchY and BchZ. Requires [4Fe-4S] cluster as cofactor.

The enzyme catalyses 3-deacetyl-3-vinylbacteriochlorophyllide a + 2 oxidized [2Fe-2S]-[ferredoxin] + ADP + phosphate = chlorophyllide a + 2 reduced [2Fe-2S]-[ferredoxin] + ATP + H2O + H(+). It catalyses the reaction bacteriochlorophyllide a + 2 oxidized [2Fe-2S]-[ferredoxin] + ADP + phosphate = 3-acetyl-3-devinylchlorophyllide a + 2 reduced [2Fe-2S]-[ferredoxin] + ATP + H2O + H(+). The catalysed reaction is 3-deacetyl-3-(1-hydroxyethyl)bacteriochlorophyllide a + 2 oxidized [2Fe-2S]-[ferredoxin] + ADP + phosphate = 3-devinyl-3-(1-hydroxyethyl)chlorophyllide a + 2 reduced [2Fe-2S]-[ferredoxin] + ATP + H2O + H(+). The protein operates within porphyrin-containing compound metabolism; bacteriochlorophyll biosynthesis. Its function is as follows. Converts chlorophylls (Chl) into bacteriochlorophylls (BChl) by reducing ring B of the tetrapyrrole. This chain is Chlorophyllide reductase 35.5 kDa chain (bchX), found in Rhodobacter capsulatus (strain ATCC BAA-309 / NBRC 16581 / SB1003).